A 45-amino-acid chain; its full sequence is uncharacterized protein (45 aa).

This is an uncharacterized protein from Treponema pallidum (strain Nichols).